The sequence spans 545 residues: Probable protein kinase UbiB (545 aa).

The Protein kinase domain occupies 123 to 501 (DFDIVPLASA…RVRQHQSHYL (379 aa)). Residues 129–137 (LASASIAQV) and Lys-152 each bind ATP. The active-site Proton acceptor is Asp-287. 2 helical membrane passes run 498-518 (SHYLFGVGATLLLSGTAVVLS) and 521-541 (EWDGLAAGLIAAGVVAWLVGW).

This sequence belongs to the ABC1 family. UbiB subfamily.

The protein localises to the cell inner membrane. It functions in the pathway cofactor biosynthesis; ubiquinone biosynthesis [regulation]. Its function is as follows. Is probably a protein kinase regulator of UbiI activity which is involved in aerobic coenzyme Q (ubiquinone) biosynthesis. The protein is Probable protein kinase UbiB of Erwinia tasmaniensis (strain DSM 17950 / CFBP 7177 / CIP 109463 / NCPPB 4357 / Et1/99).